Here is a 649-residue protein sequence, read N- to C-terminus: Protein PSK SIMULATOR 3 (649 aa).

Gly-2 carries the N-myristoyl glycine lipid modification. The segment at 18–43 (SGSSVADDGREPDFGHSQPNGQTSLI) is disordered.

The protein resides in the nucleus. In terms of biological role, promotes plant growth, especially at the vegetative stage, probably via the regulation of phytosulfokine (PSK) signaling; PSK are peptide phytohormones acting as growth factors. Together with PSI2 and PSI3, required during vegetative growth and reproduction. May also have a function in carbohydrate metabolism. The sequence is that of Protein PSK SIMULATOR 3 from Arabidopsis thaliana (Mouse-ear cress).